The sequence spans 355 residues: NADH-quinone oxidoreductase subunit H (355 aa).

The next 8 membrane-spanning stretches (helical) occupy residues 25–45, 91–111, 126–146, 170–190, 205–225, 253–273, 290–310, and 330–350; these read LVRI…LILW, WLYL…WAVI, LLYA…AGWA, MGFA…SEIV, FLSW…VSGI, MAFA…SALA, FIPG…VFIW, and VFLP…MSPL.

It belongs to the complex I subunit 1 family. NDH-1 is composed of 14 different subunits. Subunits NuoA, H, J, K, L, M, N constitute the membrane sector of the complex.

Its subcellular location is the cell inner membrane. It carries out the reaction a quinone + NADH + 5 H(+)(in) = a quinol + NAD(+) + 4 H(+)(out). NDH-1 shuttles electrons from NADH, via FMN and iron-sulfur (Fe-S) centers, to quinones in the respiratory chain. The immediate electron acceptor for the enzyme in this species is believed to be ubiquinone. Couples the redox reaction to proton translocation (for every two electrons transferred, four hydrogen ions are translocated across the cytoplasmic membrane), and thus conserves the redox energy in a proton gradient. This subunit may bind ubiquinone. This Burkholderia vietnamiensis (strain G4 / LMG 22486) (Burkholderia cepacia (strain R1808)) protein is NADH-quinone oxidoreductase subunit H.